The sequence spans 714 residues: Phosphate acetyltransferase (714 aa).

The segment at 391–714 is phosphate acetyltransferase; sequence AFRYQLTELA…LTAIQSAQQQ (324 aa).

The protein in the N-terminal section; belongs to the CobB/CobQ family. In the C-terminal section; belongs to the phosphate acetyltransferase and butyryltransferase family. Homohexamer.

Its subcellular location is the cytoplasm. The catalysed reaction is acetyl-CoA + phosphate = acetyl phosphate + CoA. It participates in metabolic intermediate biosynthesis; acetyl-CoA biosynthesis; acetyl-CoA from acetate: step 2/2. Inhibited by NADH and ATP. Pyruvate and PEP act as activators of the acetyl phosphate forming reaction while inhibiting the formation of acetyl-CoA. Involved in acetate metabolism. Catalyzes the reversible interconversion of acetyl-CoA and acetyl phosphate. The direction of the overall reaction changes depending on growth conditions. On minimal medium acetyl-CoA is generated. In rich medium acetyl-CoA is converted to acetate and allowing the cell to dump the excess of acetylation potential in exchange for energy in the form of ATP. The main pathway for acetate production during exponential phase. The sequence is that of Phosphate acetyltransferase (pta) from Escherichia coli (strain K12).